Consider the following 1402-residue polypeptide: Nuclear pore complex protein Nup160 (1402 aa).

Residues serine 10, serine 456, serine 915, and serine 1123 each carry the phosphoserine modification.

In terms of assembly, part of the nuclear pore complex (NPC). Forms part of the NUP160 subcomplex in the nuclear pore which is composed of NUP160, NUP133, NUP107 and NUP96. This complex plays a role in RNA export and in tethering NUP98 and NUP153 to the nucleus.

It is found in the nucleus. The protein localises to the nuclear pore complex. Functions as a component of the nuclear pore complex (NPC). Involved in poly(A)+ RNA transport. In Mus musculus (Mouse), this protein is Nuclear pore complex protein Nup160 (Nup160).